The following is a 188-amino-acid chain: Protein SSX1 (188 aa).

Disordered stretches follow at residues Met1 to Ser22 and Ile111 to Glu188. One can recognise a KRAB-related domain in the interval Lys20–Asp83. Residues Lys115–Gly125 show a composition bias toward basic and acidic residues. The residue at position 123 (Ser123) is a Phosphoserine. A compositionally biased stretch (basic residues) spans Lys153–Glu170. The segment covering Glu179–Glu188 has biased composition (acidic residues).

The protein belongs to the SSX family. Expressed at high level in the testis. Expressed at low level in thyroid. Not detected in tonsil, colon, lung, spleen, prostate, kidney, striated and smooth muscles. Detected in rhabdomyosarcoma and fibrosarcoma cell lines. Not detected in mesenchymal and epithelial cell lines. Expressed in testis.

It is found in the cytoplasm. It localises to the cytoskeleton. The protein localises to the flagellum axoneme. Its function is as follows. Could act as a modulator of transcription. Plays a role in spermatogenesis. The chain is Protein SSX1 (SSX1) from Homo sapiens (Human).